We begin with the raw amino-acid sequence, 251 residues long: Outer membrane protein assembly factor BamD (251 aa).

An N-terminal signal peptide occupies residues 1–19; sequence MKLTKLLSALLVIGLVLGG. Cys-20 carries N-palmitoyl cysteine lipidation. Cys-20 carries the S-diacylglycerol cysteine lipid modification. 3 TPR repeats span residues 33 to 66, 70 to 103, and 166 to 199; these read IATL…HPGN, PQAE…HPAN, and AGKE…YQTT.

Belongs to the BamD family. In terms of assembly, part of the Bam complex.

It localises to the cell outer membrane. In terms of biological role, part of the outer membrane protein assembly complex, which is involved in assembly and insertion of beta-barrel proteins into the outer membrane. In Rickettsia prowazekii (strain Madrid E), this protein is Outer membrane protein assembly factor BamD.